Consider the following 158-residue polypeptide: MSSRHFKIKNSLFWWVAGLALASDRLTKAWIVATYALTVPPQTTPIIPGVFHITYVTNTGAAFSLFANGSIWLRWLSLIVSLGLITWAILGPRLDRWQQVGYGCLLGGALGNGIDRFLTGEVVDFLDFRWIQFPVFNVADIAINIGIVCLLWSAWHPR.

3 consecutive transmembrane segments (helical) span residues 12–32, 46–66, and 71–91; these read LFWWVAGLALASDRLTKAWIV, IIPGVFHITYVTNTGAAFSLF, and IWLRWLSLIVSLGLITWAILG. Catalysis depends on residues Asp-124 and Asp-140. A helical transmembrane segment spans residues 135-155; sequence VFNVADIAINIGIVCLLWSAW.

It belongs to the peptidase A8 family.

It localises to the cell inner membrane. The enzyme catalyses Release of signal peptides from bacterial membrane prolipoproteins. Hydrolyzes -Xaa-Yaa-Zaa-|-(S,diacylglyceryl)Cys-, in which Xaa is hydrophobic (preferably Leu), and Yaa (Ala or Ser) and Zaa (Gly or Ala) have small, neutral side chains.. It functions in the pathway protein modification; lipoprotein biosynthesis (signal peptide cleavage). Its function is as follows. This protein specifically catalyzes the removal of signal peptides from prolipoproteins. In Thermosynechococcus vestitus (strain NIES-2133 / IAM M-273 / BP-1), this protein is Lipoprotein signal peptidase.